The chain runs to 100 residues: Urease subunit gamma (100 aa).

The protein belongs to the urease gamma subunit family. As to quaternary structure, heterotrimer of UreA (gamma), UreB (beta) and UreC (alpha) subunits. Three heterotrimers associate to form the active enzyme.

It is found in the cytoplasm. The enzyme catalyses urea + 2 H2O + H(+) = hydrogencarbonate + 2 NH4(+). It functions in the pathway nitrogen metabolism; urea degradation; CO(2) and NH(3) from urea (urease route): step 1/1. In Synechococcus sp. (strain CC9605), this protein is Urease subunit gamma.